The sequence spans 721 residues: Glucans biosynthesis glucosyltransferase H (721 aa).

6 helical membrane-spanning segments follow: residues 53–75, 85–107, 404–426, 456–478, 490–512, and 567–589; these read VLIMVATAVLSAAGIYEMYQVLQ, VVLVLFAALFAWVALSFVSALAG, GIGAYLTAPMWLAFLIAGILISL, WVFAGTMGLLILPKLLALFLVLI, LRTFGGVLLETMISALTAPVMMV, and WPLLLWMTPVIVGLLLAIPVALL.

It belongs to the glycosyltransferase 2 family. OpgH subfamily.

The protein resides in the cell inner membrane. Its pathway is glycan metabolism; osmoregulated periplasmic glucan (OPG) biosynthesis. Its function is as follows. Involved in the biosynthesis of osmoregulated periplasmic glucans (OPGs). The sequence is that of Glucans biosynthesis glucosyltransferase H from Rhodopseudomonas palustris (strain ATCC BAA-98 / CGA009).